The sequence spans 354 residues: MDNERRLVLLTGATGHVGFAVLVEALEAEYNVRVVLREISKADSILSSEPVKNALSSTAAPELSFVEVPDMTVPGAFDSAMQSVTYVVHCASPINRGKFRDFQTELIDPAVKGTTNILKAAHATPSVLRVVITSSNSAIVNHNILPAPGTCVSPSDRQPDYPLDVAMHDADEAYSAAKTSALNATDTFVSSANDLRFDVVSIMPTFVFGPKELAKSPGDIIDGSNVFGIGLVLIKQSWGSLRIEAVSCHIDDVAQAHVQALNHDEDVQFPFKAGTHRSCLLASSFRPDEVRDIVEREFPKESWQGEEAVFRGKGSYAWYHTDYDVSAAEKLLGRKLKGIVEQIRSSGLQVLRIA.

2 residues coordinate NADP(+): Lys41 and Tyr174.

Belongs to the NAD(P)-dependent epimerase/dehydratase family. Dihydroflavonol-4-reductase subfamily.

It participates in mycotoxin biosynthesis. In terms of biological role, NAD-dependent epimerase/dehydratase; part of the gene cluster that mediates the biosynthesis of the host-selective toxins (HSTs) AAL-toxins, sphinganine-analog mycotoxins responsible for Alternaria stem canker on tomato by the tomato pathotype. The biosynthesis starts with the polyketide synthase ALT1-catalyzed C-16 carbon chain assembly from one starter acetyl-CoA unit with malonyl-CoA extender units. ALT1 also selectively transfers methyl groups at the first and the third cycle of chain elongation for AAL toxin. The C-16 polyketide chain is released from the enzyme by a nucleophilic attack of a carbanion, which is derived from R-carbon of glycin by decarboxylation, on the carbonyl carbon of polyketide acyl chain. This step is probably catalyzed by a pyridoxal 5'-phosphate-dependent aminoacyl transferase ALT4. The respective functions of the other enzymes encoded by the cluster have still to be elucidated. The sphingosine N-acyltransferase-like protein ALT7 seems not to act as a resistance/self-tolerance factor against the toxin in the toxin biosynthetic gene cluster, contrary to what is expected. This Alternaria alternata (Alternaria rot fungus) protein is NAD-dependent epimerase/dehydratase ALT6.